Reading from the N-terminus, the 907-residue chain is DNA ligase 4 (907 aa).

Residues Glu-273, Lys-275, Arg-280, Glu-333, Phe-378, Glu-438, Lys-443, Lys-460, and Lys-462 each contribute to the ATP site. Residue Lys-275 is the N6-AMP-lysine intermediate of the active site. Residue Glu-333 coordinates Mg(2+). Glu-438 provides a ligand contact to Mg(2+). 2 consecutive BRCT domains span residues 655–754 (PVSN…ESDI) and 800–906 (VPLF…HYQC).

It belongs to the ATP-dependent DNA ligase family. The cofactor is Mg(2+).

The protein resides in the nucleus. The catalysed reaction is ATP + (deoxyribonucleotide)n-3'-hydroxyl + 5'-phospho-(deoxyribonucleotide)m = (deoxyribonucleotide)n+m + AMP + diphosphate.. DNA ligase involved in DNA non-homologous end joining (NHEJ); required for double-strand break (DSB) repair. This is DNA ligase 4 (LIG4) from Kluyveromyces lactis (strain ATCC 8585 / CBS 2359 / DSM 70799 / NBRC 1267 / NRRL Y-1140 / WM37) (Yeast).